Here is a 76-residue protein sequence, read N- to C-terminus: U7-lycotoxin-Ls1c (76 aa).

The N-terminal stretch at 1-22 (MKLIIFTGLALFLLVSLIDVEA) is a signal peptide. Positions 23 to 26 (QNEG) are excised as a propeptide.

Belongs to the neurotoxin 19 (CSTX) family. 07 (U7-Lctx) subfamily. Post-translationally, contains 4 disulfide bonds. Expressed by the venom gland.

The protein resides in the secreted. This chain is U7-lycotoxin-Ls1c, found in Lycosa singoriensis (Wolf spider).